The chain runs to 502 residues: Protein Dok-7 (502 aa).

The region spanning 4 to 109 is the PH domain; sequence SVVVEGYARL…WDARLRYSLG (106 aa). The region spanning 105–210 is the IRS-type PTB domain; the sequence is RYSLGEVHRF…RGISPTRGPF (106 aa). Disordered regions lie at residues 210 to 232, 249 to 279, 291 to 358, and 418 to 482; these read FGLRPVLPDPSTSETSSEERLNH, STASYCPSAGGDDRSISGSSDTSDTSHSDCS, TSIQ…GSFS, and EVGG…GHPG. Composition is skewed to low complexity over residues 264 to 279 and 301 to 316; these read ISGSSDTSDTSHSDCS and AGAKAAAQSAEKPLPS. Residues 336–346 show a composition bias toward polar residues; the sequence is GRQSSSDSGIA. Over residues 347–358 the composition is skewed to low complexity; that stretch reads TGSHSSYSGSFS. Basic and acidic residues predominate over residues 459 to 473; the sequence is PNEHFRSPSESKKSS.

Its subcellular location is the cell membrane. The protein localises to the synapse. In terms of biological role, probable muscle-intrinsic activator of MUSK that plays an essential role in neuromuscular synaptogenesis. Acts in aneural activation of MUSK and subsequent acetylcholine receptor (AchR) clustering in myotubes. The polypeptide is Protein Dok-7 (dok7) (Takifugu rubripes (Japanese pufferfish)).